Here is a 470-residue protein sequence, read N- to C-terminus: Uronate isomerase (470 aa).

This sequence belongs to the metallo-dependent hydrolases superfamily. Uronate isomerase family.

The catalysed reaction is D-glucuronate = D-fructuronate. It catalyses the reaction aldehydo-D-galacturonate = keto-D-tagaturonate. It participates in carbohydrate metabolism; pentose and glucuronate interconversion. The protein is Uronate isomerase of Salmonella heidelberg (strain SL476).